A 309-amino-acid polypeptide reads, in one-letter code: tRNA dimethylallyltransferase (309 aa).

13 to 20 contacts ATP; the sequence is GPTAVGKS. Residue 15–20 participates in substrate binding; it reads TAVGKS.

The protein belongs to the IPP transferase family. In terms of assembly, monomer. Requires Mg(2+) as cofactor.

The enzyme catalyses adenosine(37) in tRNA + dimethylallyl diphosphate = N(6)-dimethylallyladenosine(37) in tRNA + diphosphate. In terms of biological role, catalyzes the transfer of a dimethylallyl group onto the adenine at position 37 in tRNAs that read codons beginning with uridine, leading to the formation of N6-(dimethylallyl)adenosine (i(6)A). The polypeptide is tRNA dimethylallyltransferase (Lacticaseibacillus paracasei (strain ATCC 334 / BCRC 17002 / CCUG 31169 / CIP 107868 / KCTC 3260 / NRRL B-441) (Lactobacillus paracasei)).